We begin with the raw amino-acid sequence, 571 residues long: Urease subunit alpha (571 aa).

The Urease domain maps to 133–571 (GGIDTHVHFI…LPLAQRYFLF (439 aa)). His138, His140, and Lys221 together coordinate Ni(2+). Lys221 is modified (N6-carboxylysine). Substrate is bound at residue His223. The Ni(2+) site is built by His250 and His276. The active-site Proton donor is His324. Asp364 contacts Ni(2+).

The protein belongs to the metallo-dependent hydrolases superfamily. Urease alpha subunit family. In terms of assembly, heterotrimer of UreA (gamma), UreB (beta) and UreC (alpha) subunits. Three heterotrimers associate to form the active enzyme. It depends on Ni cation as a cofactor. Post-translationally, carboxylation allows a single lysine to coordinate two nickel ions.

It localises to the cytoplasm. The enzyme catalyses urea + 2 H2O + H(+) = hydrogencarbonate + 2 NH4(+). It participates in nitrogen metabolism; urea degradation; CO(2) and NH(3) from urea (urease route): step 1/1. The polypeptide is Urease subunit alpha (Staphylococcus carnosus (strain TM300)).